Consider the following 165-residue polypeptide: MPLNREDKQAVVAEVAAQVAKAQTVVLAEYRGIAVGDLTTLRAKAREQKVYLRVLKNTLARRAVEGTPFAPLAEQMTGPLIYGISEDAIAAAKVVHDFSKSNDKLVIKAGSYDGKVMDKAGVQALASIPSREELLSKLLFVMQAPVSGFARALAALAEKKQAEAA.

This sequence belongs to the universal ribosomal protein uL10 family. Part of the ribosomal stalk of the 50S ribosomal subunit. The N-terminus interacts with L11 and the large rRNA to form the base of the stalk. The C-terminus forms an elongated spine to which L12 dimers bind in a sequential fashion forming a multimeric L10(L12)X complex.

Its function is as follows. Forms part of the ribosomal stalk, playing a central role in the interaction of the ribosome with GTP-bound translation factors. The polypeptide is Large ribosomal subunit protein uL10 (Burkholderia mallei (strain NCTC 10229)).